The chain runs to 536 residues: Thiamine transport system permease protein ThiP (536 aa).

Transmembrane regions (helical) follow at residues 12–32, 58–78, 95–115, 134–154, 199–219, 240–260, 293–313, 334–354, 374–394, 404–424, 463–483, and 506–526; these read WLIP…AAFL, FSFW…IFLA, LCAM…LSVY, FSPY…LPMA, VAAL…SLGG, PARA…LVLL, VLIV…IVDG, SLRI…MLLW, SGML…FLLL, ADGI…LKVL, AQAL…VALF, and DGAV…TVIE. The 206-residue stretch at 56-261 folds into the ABC transmembrane type-1 1 domain; sequence VRFSFWQAFL…VCCLGLVLLS (206 aa). The ABC transmembrane type-1 2 domain maps to 331–525; that stretch reads LWTSLRIALA…LLCFLLFTVI (195 aa).

The protein belongs to the binding-protein-dependent transport system permease family. CysTW subfamily. In terms of assembly, the complex is composed of two ATP-binding proteins (ThiQ), two transmembrane proteins (ThiP) and a solute-binding protein (ThiB).

The protein resides in the cell inner membrane. With respect to regulation, transport is inhibited by the sulfhydryl-specific modifier N-ethylmaleimide. Its function is as follows. Part of the ABC transporter complex ThiBPQ involved in thiamine import. Probably responsible for the translocation of the substrate across the membrane. The polypeptide is Thiamine transport system permease protein ThiP (thiP) (Escherichia coli (strain K12)).